The following is a 242-amino-acid chain: MDKKETHLIGHLEELRRRIIVTLAAFFLFLITAFLFVQDIYDWLIRDLDGKLAVLGPSEILWVYMMLSGICAIAASIPVAAYQLWRFVAPALTKTERKVTLMYIPGLFALFLAGISFGYFVLFPIVLSFLTHLSSGHFETMFTADRYFRFMVNLSLPFGFLFEMPLVVMFLTRLGILNPYRLAKARKLSYFLLIVVSILITPPDFISDFLVMIPLLVLFEVSVTLSAFVYKKRMREETAAAA.

3 consecutive transmembrane segments (helical) span residues 19–39, 60–80, and 107–127; these read IIVT…FVQD, ILWV…IPVA, and LFAL…PIVL. The interaction with TatAd stretch occupies residues 128–149; the sequence is SFLTHLSSGHFETMFTADRYFR. A helical transmembrane segment spans residues 150–170; the sequence is FMVNLSLPFGFLFEMPLVVMF. Positions 171 to 187 are interaction with TatAd; it reads LTRLGILNPYRLAKARK. The next 2 helical transmembrane spans lie at 188 to 208 and 209 to 229; these read LSYF…FISD and FLVM…SAFV.

The protein belongs to the TatC family. As to quaternary structure, forms a complex with TatAd. Two types of complexes exist: one composed of TatAd and TatCd, and another composed only of TatAd.

The protein resides in the cell membrane. Part of the twin-arginine translocation (Tat) system that transports large folded proteins containing a characteristic twin-arginine motif in their signal peptide across membranes. Required for PhoD secretion. TatCd promotes membrane localization of TatAd via domain specific interactions. TatCd is required for stabile production of TatAd as well as for its maintenance. This Bacillus subtilis (strain 168) protein is Sec-independent protein translocase protein TatCd.